We begin with the raw amino-acid sequence, 575 residues long: Pre-hexon-linking protein IIIa (575 aa).

The tract at residues 1–95 (MTSSDTFLAL…DLLNRAYTWN (95 aa)) is peripentonal hexon-tethering domain. Residues 129–243 (ANASLLTQFF…FYDYGAMEPG (115 aa)) are binding to hexon-linking protein. S497 bears the Phosphoserine; by host mark. A propeptide spanning residues 515 to 575 (GGPGFFASLR…SRRGRKLRFY (61 aa)) is cleaved from the precursor. Positions 525 to 549 (PSIGSRQPTGTAVGLRPTTPYSGSG) are disordered.

The protein belongs to the adenoviridae hexon-linking protein IIIa family. Interacts with hexon proteins; this interaction tethers the peripentonal hexons to hexons situated in the facet. Interacts with the penton protein (via N-terminus). Interacts with packaging protein 3; this interaction is required to promote correct genome packaging. Post-translationally, cleaved near the C-terminus by the viral protease during virion maturation to form the mature protein.

The protein localises to the virion. It localises to the host nucleus. In terms of biological role, structural component of the virion that acts as a cement protein on the capsid exterior which mediates the interactions between the hexons, including the peripentonal hexons, and reaches all the way to the penton vertices. Two hexon linking proteins IIIa, one from each facet, stabilize the unique edge interface between a pair of facets. As the virus enters the host cell, hexon linking proteins IIIa are shed concomitant with virion acidification in the endosome. During virus assembly, seems to play a role in the serotype specificity of the packaging of viral DNA via its interaction with packaging protein 3. This Galliformes (FAdV-1) protein is Pre-hexon-linking protein IIIa.